A 377-amino-acid polypeptide reads, in one-letter code: Nitric oxide reductase FlRd-NAD(+) reductase (377 aa).

It belongs to the FAD-dependent oxidoreductase family. The cofactor is FAD.

It localises to the cytoplasm. It carries out the reaction 2 reduced [nitric oxide reductase rubredoxin domain] + NAD(+) + H(+) = 2 oxidized [nitric oxide reductase rubredoxin domain] + NADH. Its pathway is nitrogen metabolism; nitric oxide reduction. One of at least two accessory proteins for anaerobic nitric oxide (NO) reductase. Reduces the rubredoxin moiety of NO reductase. In Shigella dysenteriae serotype 1 (strain Sd197), this protein is Nitric oxide reductase FlRd-NAD(+) reductase.